A 505-amino-acid polypeptide reads, in one-letter code: uncharacterized protein (505 aa).

The Radical SAM core domain maps to 193-440 (CTNKKCNLCE…LEIKKKYIGR (248 aa)). Positions 208, 216, and 219 each coordinate [4Fe-4S] cluster. Residues 435 to 499 (KKYIGRVLEV…EKYLEGRILK (65 aa)) form the TRAM domain.

[4Fe-4S] cluster is required as a cofactor.

This is an uncharacterized protein from Methanocaldococcus jannaschii (strain ATCC 43067 / DSM 2661 / JAL-1 / JCM 10045 / NBRC 100440) (Methanococcus jannaschii).